The primary structure comprises 347 residues: tRNA pseudouridine synthase D (347 aa).

The active-site Nucleophile is D78. Residues 150-304 (GLPNFFGPQR…AEGTRRAARL (155 aa)) form the TRUD domain.

The protein belongs to the pseudouridine synthase TruD family.

It carries out the reaction uridine(13) in tRNA = pseudouridine(13) in tRNA. In terms of biological role, responsible for synthesis of pseudouridine from uracil-13 in transfer RNAs. In Anaeromyxobacter dehalogenans (strain 2CP-C), this protein is tRNA pseudouridine synthase D.